The following is a 120-amino-acid chain: NAD(P)H-quinone oxidoreductase subunit 3, chloroplastic (120 aa).

3 helical membrane-spanning segments follow: residues 9-29, 64-84, and 88-108; these read IFWAFLIISSVIPILAFLISG, MFALVFVVFDVETVFLYPWAM, and VLGVSVFIEALIFVLILIVGL.

It belongs to the complex I subunit 3 family. As to quaternary structure, NDH is composed of at least 16 different subunits, 5 of which are encoded in the nucleus.

Its subcellular location is the plastid. It localises to the chloroplast thylakoid membrane. It carries out the reaction a plastoquinone + NADH + (n+1) H(+)(in) = a plastoquinol + NAD(+) + n H(+)(out). It catalyses the reaction a plastoquinone + NADPH + (n+1) H(+)(in) = a plastoquinol + NADP(+) + n H(+)(out). In terms of biological role, NDH shuttles electrons from NAD(P)H:plastoquinone, via FMN and iron-sulfur (Fe-S) centers, to quinones in the photosynthetic chain and possibly in a chloroplast respiratory chain. The immediate electron acceptor for the enzyme in this species is believed to be plastoquinone. Couples the redox reaction to proton translocation, and thus conserves the redox energy in a proton gradient. The polypeptide is NAD(P)H-quinone oxidoreductase subunit 3, chloroplastic (Populus alba (White poplar)).